A 439-amino-acid chain; its full sequence is Acetyl esterase Axe7A (439 aa).

Positions 1–31 (MFNFAPKQTTEMKKLLFTLVFVLGSMATALA) are cleaved as a signal peptide. S309 (nucleophile) is an active-site residue. Catalysis depends on charge relay system residues D391 and H420.

The protein belongs to the carbohydrate esterase 7 family.

Its pathway is glycan degradation; xylan degradation. Involved in degradation of plant cell wall polysaccharides. Has acetyl esterase activity towards a broad range of substrates including xylose-tetraacetate, 4-O-methylumbelliferyl acetate, glucose-pentaacetate, cephalosporin C, and acetylated xylo-oligosaccharides smaller than xylo-heptaose. Displays no detectable activity on polymeric acetylated xylan. This Xylanibacter ruminicola (strain ATCC 19189 / DSM 19721 / CIP 105475 / JCM 8958 / 23) (Prevotella ruminicola) protein is Acetyl esterase Axe7A.